Reading from the N-terminus, the 273-residue chain is DNA repair protein RecO (273 aa).

The protein belongs to the RecO family.

Involved in DNA repair and RecF pathway recombination. In Mycolicibacterium gilvum (strain PYR-GCK) (Mycobacterium gilvum (strain PYR-GCK)), this protein is DNA repair protein RecO.